Consider the following 726-residue polypeptide: ORC ubiquitin ligase 1 (726 aa).

The segment at 18-56 (CHICLGKVRQPVICINNHVFCSICIDLWLKNNSQCPACR) adopts an RING-type; degenerate zinc-finger fold. 2 coiled-coil regions span residues 87-129 (LRKT…TILD) and 155-270 (ETVA…MNSI). The residue at position 210 (S210) is a Phosphoserine. The interval 274–335 (ALPADGKGSK…ARQESTSKAE (62 aa)) is disordered. The span at 280 to 290 (KGSKGSEEDVA) shows a compositional bias: basic and acidic residues. The segment covering 300–320 (KQPSSSTSSSSHLAKPSSSRL) has biased composition (low complexity). The span at 321–334 (CDTSSARQESTSKA) shows a compositional bias: polar residues. Phosphoserine occurs at positions 526, 553, 561, 568, 570, 719, and 721. The disordered stretch occupies residues 687–726 (QSPWSTSFVPEKRNKNVNQSTKRKIQSSLSNASPSKATKS). Over residues 702-726 (NVNQSTKRKIQSSLSNASPSKATKS) the composition is skewed to polar residues.

As to quaternary structure, associates with ORC complex. Binds to chromatin; association is cell cycle-regulated, absent from mitotic chromosomes, is associated with chromatin from G1 and partially released from chromatin from mid S-phase. Post-translationally, auto-ubiquitinated.

The protein resides in the chromosome. The enzyme catalyses S-ubiquitinyl-[E2 ubiquitin-conjugating enzyme]-L-cysteine + [acceptor protein]-L-lysine = [E2 ubiquitin-conjugating enzyme]-L-cysteine + N(6)-ubiquitinyl-[acceptor protein]-L-lysine.. Functionally, E3 ubiquitin ligase essential for DNA replication origin activation during S phase. Acts as a replication origin selector which selects the origins to be fired and catalyzes the multi-mono-ubiquitination of a subset of chromatin-bound ORC3 and ORC5 during S-phase. In Pongo abelii (Sumatran orangutan), this protein is ORC ubiquitin ligase 1 (OBI1).